The sequence spans 585 residues: Beta-(1--&gt;2)glucan export ATP-binding/permease protein NdvA (585 aa).

The region spanning 21 to 301 (VGAIVIANIV…MKAFATQIFE (281 aa)) is the ABC transmembrane type-1 domain. A run of 6 helical transmembrane segments spans residues 22-42 (GAIV…PILF), 55-75 (VAPM…AFVL), 136-156 (QHLA…AMDV), 158-178 (LSLI…VVMS), 245-265 (LNRI…TVLV), and 269-289 (ELGV…IGRL). Residues 335 to 569 (VEFRDISFDF…NGRFAALLRA (235 aa)) form the ABC transporter domain. 368-375 (GPTGAGKT) lines the ATP pocket.

This sequence belongs to the ABC transporter superfamily. Beta-(1--&gt;2)glucan exporter (TC 3.A.1.108.1) family. In terms of assembly, homodimer.

Its subcellular location is the cell inner membrane. It catalyses the reaction [(1-&gt;2)-beta-D-glucosyl](n)(in) + ATP + H2O = [(1-&gt;2)-beta-D-glucosyl](n)(out) + ADP + phosphate + H(+). In terms of biological role, involved in beta-(1--&gt;2)glucan export which is required for nodulation of legume roots. May be involved in other classes of oligosaccharides export. Transmembrane domains (TMD) form a pore in the inner membrane and the ATP-binding domain (NBD) is responsible for energy generation. In Rhizobium meliloti (strain 1021) (Ensifer meliloti), this protein is Beta-(1--&gt;2)glucan export ATP-binding/permease protein NdvA.